Consider the following 1872-residue polypeptide: Ral GTPase-activating protein subunit alpha-2 (1872 aa).

The interval 350–370 is disordered; it reads DGAGSTEQDKSHSNSSTLSDR. Residues S373, S376, and S379 each carry the phosphoserine modification. The segment covering 445-469 has biased composition (basic and acidic residues); the sequence is PDKKDVAQEDADKLGLSETDSKEAS. The tract at residues 445 to 481 is disordered; it reads PDKKDVAQEDADKLGLSETDSKEASSESSGHKRSSSW. Phosphoserine is present on S486. Position 696 is a phosphoserine; by PKB (S696). Disordered regions lie at residues 711 to 730 and 758 to 813; these read FRSA…NTVR and QQVP…GITM. Phosphothreonine; by PKB is present on T715. 2 stretches are compositionally biased toward polar residues: residues 758-768 and 775-795; these read QQVPRSSSTSD and SDSS…SEPK. Basic and acidic residues predominate over residues 796 to 810; the sequence is SVQESKGHVTHEHEG. S819 and S820 each carry phosphoserine. The segment at 831-851 is disordered; that stretch reads QQAHGRCRQRQTSESTGSDTV. Residues 840-849 show a composition bias toward polar residues; the sequence is RQTSESTGSD. S1592 is modified (phosphoserine). Residues 1634-1842 enclose the Rap-GAP domain; it reads LKNLDSRQCR…EERALYLEAI (209 aa).

Component of the heterodimeric RalGAP2 complex with RALGAPB. Heterodimerization is required for activity. In terms of tissue distribution, abundantly expressed in testis, pancreas, lung, thymus, brown fat, and white fat.

The protein resides in the cytoplasm. Its function is as follows. Catalytic subunit of the heterodimeric RalGAP2 complex which acts as a GTPase activator for the Ras-like small GTPases RALA and RALB. In Mus musculus (Mouse), this protein is Ral GTPase-activating protein subunit alpha-2 (Ralgapa2).